The primary structure comprises 533 residues: MQYGNLTTVLLLRNTLLSLNSSSICHVHWLQVIVALLVLIVCIFLYWRTPTGINAPFAGYRSPWEPPLLVQMRYVFNAASMIREGYAKWKDSLFQISRYDGDILIVPPRYLDDLHNKSQEELSAIYGLIRNFGGSYSGITLLGENDVGIRALQTKITPNLAKLCDDIRDEFQYCLDTDFPACRDWTSVSVHPLFLKAVERITHRIFVGLPLCRNPQWVQATSKHAHYATMIQIAMRSVPKFIQPLLNFCLPWPWKNAACVREAKNALILEMQRRRNLEKVNSFDYIKSNDLLQAVMEMSSPSHEDSQLDVVAQIMLTMNTIAGHSTAASGAHALFDMVSHSKYIELLREEALQVFRHVELRVTKQALGDLRKLDSFLRESQRHNPLSLLGFFRVVLDPAGITLQDGTHVPYNTLLCVAPHAISNDPDVIEDPTSFNGLRYYEQRCRDASQEKKHQYATTDKSHLHFGYGTWACPGRFLASDMLKVILTMLLLQYDIRSPERAKRPVAGHFHEFPLFNINTPLLMKRRNDSLVL.

Residues 27–47 (VHWLQVIVALLVLIVCIFLYW) form a helical membrane-spanning segment. N116 carries N-linked (GlcNAc...) asparagine glycosylation. C473 provides a ligand contact to heme. N-linked (GlcNAc...) asparagine glycosylation occurs at N528.

This sequence belongs to the cytochrome P450 family. Heme serves as cofactor.

It is found in the membrane. Its pathway is secondary metabolite biosynthesis. In terms of biological role, cytochrome P450 monooxygenase; part of the gene clusters that mediates the biosynthesis of lolitrems, indole-diterpene mycotoxins that are potent tremorgens in mammals, and are synthesized by clavicipitaceous fungal endophytes in association with their grass hosts. The geranylgeranyl diphosphate (GGPP) synthase ltmG is proposed to catalyze the first step in lolitrem biosynthesis. LtmG catalyzes a series of iterative condensations of isopentenyl diphosphate (IPP) with dimethylallyl diphosphate (DMAPP), geranyl diphosphate (GPP), and farnesyl diphosphate (FPP), to form GGPP. GGPP then condenses with indole-3-glycerol phosphate to form 3-geranylgeranylindole, an acyclic intermediate, to be incorporated into paxilline. Either ltmG or ltmC could be responsible for this step, as both are putative prenyl transferases. The FAD-dependent monooxygenase ltmM then catalyzes the epoxidation of the two terminal alkenes of the geranylgeranyl moiety, which is subsequently cyclized by ltmB, to paspaline. The cytochrome P450 monooxygenases ltmQ and ltmP can sequentially oxidize paspaline to terpendole E and terpendole F. Alternatively, ltmP converts paspaline to an intermediate which is oxidized by ltmQ to terpendole F. LtmF, ltmK, ltmE and ltmJ appear to be unique to the epichloe endophytes. The prenyltransferase ltmF is involved in the 27-hydroxyl-O-prenylation. The cytochrome P450 monooxygenase ltmK is required for the oxidative acetal ring formation. The multi-functional prenyltransferase ltmE is required for C20- and C21-prenylations of the indole ring of paspalanes and acts together with the cytochrome P450 monooxygenase ltmJ to yield lolitremanes by multiple oxidations and ring closures. The stereoisomer pairs of lolitriol and lolitrem N or lolitrem B and lolitrem F may be attributed to variations in the way in which ring closure can occur under the action of ltmJ. While the major product of this pathway is lolitrem B, the prenyl transferases and cytochrome P450 monooxygenases identified in this pathway have a remarkable versatility in their regio- and stereo-specificities to generate a diverse range of metabolites that are products of a metabolic grid rather than a linear pathway. The chain is Cytochrome P450 monooxygenase ltmK from Epichloe festucae var. lolii (Neotyphodium lolii).